Reading from the N-terminus, the 664-residue chain is NAD(P)H-quinone oxidoreductase chain 5 (664 aa).

The next 16 helical transmembrane spans lie at 7 to 27 (YAWL…IGLI), 39 to 59 (LNAV…FGLL), 91 to 111 (HLSA…MIYT), 120 to 140 (GYVR…GLVF), 144 to 164 (LVQV…LIGF), 187 to 207 (FGLL…EFDL), 219 to 239 (GQIS…GPVA), 258 to 278 (TPIS…FLVA), 290 to 310 (AMNV…TIAL), 327 to 347 (LGYM…FHLM), 352 to 372 (FKAM…EVVG), 395 to 415 (ATTF…AGFW), 420 to 440 (ILGL…ATAG), 495 to 515 (FPLM…VPWG), 541 to 561 (FLIM…IASL), and 643 to 663 (VQFY…FFSV).

It belongs to the complex I subunit 5 family.

Its subcellular location is the cell membrane. The catalysed reaction is a plastoquinone + NADH + (n+1) H(+)(in) = a plastoquinol + NAD(+) + n H(+)(out). It catalyses the reaction a plastoquinone + NADPH + (n+1) H(+)(in) = a plastoquinol + NADP(+) + n H(+)(out). Functionally, NDH-1 shuttles electrons from NAD(P)H, via FMN and iron-sulfur (Fe-S) centers, to quinones in the respiratory chain. The immediate electron acceptor for the enzyme in this species is believed to be plastoquinone. Couples the redox reaction to proton translocation (for every two electrons transferred, four hydrogen ions are translocated across the cytoplasmic membrane), and thus conserves the redox energy in a proton gradient. This Picosynechococcus sp. (strain ATCC 27264 / PCC 7002 / PR-6) (Agmenellum quadruplicatum) protein is NAD(P)H-quinone oxidoreductase chain 5 (ndhF).